The sequence spans 541 residues: uncharacterized protein (541 aa).

Helical transmembrane passes span 4–23 (FVAN…LAIG), 30–47 (FSLG…FAAV), 57–79 (VYIL…AFFA), 91–113 (LAIT…IHLN), and 156–178 (LVAY…GLCA). 2 consecutive RCK C-terminal domains span residues 187–271 (QEAH…VLGD) and 273–354 (LPGD…LFGD). Helical transmembrane passes span 362 to 384 (FNLF…EVPL), 389 to 411 (ALSL…VGRS), 424 to 446 (LALR…GASF), 456 to 478 (LTII…VVGY), and 516 to 538 (LGYT…VVLF).

Belongs to the AAE transporter (TC 2.A.81) family.

Its subcellular location is the cell membrane. This is an uncharacterized protein from Corynebacterium diphtheriae (strain ATCC 700971 / NCTC 13129 / Biotype gravis).